The primary structure comprises 338 residues: Sesquiterpene synthase 1 (338 aa).

Mg(2+)-binding residues include Asp93, Asn228, Ser232, and Glu236. The DDXXD motif signature appears at 93–97 (DNISD). Residues 228–236 (NDIFSYNVE) carry the NSE/DTE motif motif. Positions 316 and 317 each coordinate (2E,6E)-farnesyl diphosphate.

The protein belongs to the terpene synthase family. Requires Mg(2+) as cofactor.

It carries out the reaction (2E,6E)-farnesyl diphosphate = alpha-copaene + diphosphate. It catalyses the reaction (2E,6E)-farnesyl diphosphate = beta-copaene + diphosphate. The catalysed reaction is (2E,6E)-farnesyl diphosphate = alpha-muurolene + diphosphate. The enzyme catalyses (2E,6E)-farnesyl diphosphate = gamma-muurolene + diphosphate. It carries out the reaction (2E,6E)-farnesyl diphosphate = delta-cadinene + diphosphate. Terpene cyclase that catalyzes the cyclization of farnesyl diphosphate (FPP) to various sesquiterpenes, including alpha-copaene, beta-copaene, beta-elemene, alpha-muurolene, gamma-muurolene and delta-cadinene. The polypeptide is Sesquiterpene synthase 1 (Postia placenta (strain ATCC 44394 / Madison 698-R) (Brown rot fungus)).